A 177-amino-acid polypeptide reads, in one-letter code: MSRVAKAPVSIPAGVEVTLNEQTLTVKGGKGSLTRVINNAVNVVIEAGVVKFLPVEGVSNAWAQAGTTRALVNNMVVGVSQGFERKLKLVGVGYRAKLVGSDIDLTLGFSHPLVHKLPAGVTAECPSQTDIVLRGVDKQLIGQVAAEIRGYRPPEPYKGKGVRYDDEVVRRKEAKKK.

This sequence belongs to the universal ribosomal protein uL6 family. Part of the 50S ribosomal subunit.

This protein binds to the 23S rRNA, and is important in its secondary structure. It is located near the subunit interface in the base of the L7/L12 stalk, and near the tRNA binding site of the peptidyltransferase center. The protein is Large ribosomal subunit protein uL6 of Shewanella baltica (strain OS223).